Reading from the N-terminus, the 583-residue chain is Steryl-sulfatase (583 aa).

Positions Met-1 to Ser-21 are cleaved as a signal peptide. Topologically, residues His-22–Arg-184 are lumenal. Ca(2+) is bound by residues Asp-35 and Asp-36. Asn-47 is a glycosylation site (N-linked (GlcNAc...) asparagine). Cys-75 is a Ca(2+) binding site. Cys-75 acts as the Nucleophile in catalysis. Cys-75 carries the post-translational modification 3-oxoalanine (Cys). Residue His-136 is part of the active site. 2 disulfides stabilise this stretch: Cys-141-Cys-148 and Cys-170-Cys-242. The chain crosses the membrane as a helical span at residues Leu-185–Leu-208. The Cytoplasmic portion of the chain corresponds to Leu-209–Pro-212. Residues Leu-213 to Leu-234 form a helical membrane-spanning segment. The Lumenal segment spans residues His-235–Arg-583. An N-linked (GlcNAc...) asparagine glycan is attached at Asn-259. Ca(2+) is bound by residues Asp-342 and Gln-343. 4 disulfide bridges follow: Cys-446–Cys-489, Cys-481–Cys-487, Cys-562–Cys-570, and Cys-563–Cys-572.

Belongs to the sulfatase family. Homodimer. It depends on Ca(2+) as a cofactor. Post-translationally, the conversion to 3-oxoalanine (also known as C-formylglycine, FGly), of a serine or cysteine residue in prokaryotes and of a cysteine residue in eukaryotes, is critical for catalytic activity.

It is found in the cytoplasmic vesicle. The protein localises to the secretory vesicle. It localises to the microneme membrane. Its subcellular location is the endoplasmic reticulum membrane. It carries out the reaction dehydroepiandrosterone 3-sulfate + H2O = 3beta-hydroxyandrost-5-en-17-one + sulfate + H(+). The enzyme catalyses estrone 3-sulfate + H2O = estrone + sulfate + H(+). Functionally, catalyzes the conversion of sulfated steroid precursors, such as dehydroepiandrosterone sulfate (DHEA-S) and estrone sulfate to the free steroid. The protein is Steryl-sulfatase (STS) of Homo sapiens (Human).